A 1735-amino-acid polypeptide reads, in one-letter code: Glutamine and serine-rich protein 1 (1735 aa).

Methionine 1 carries the post-translational modification N-acetylmethionine. Polar residues predominate over residues 267–297 (AIPSSGYPPSTTKIKSCSTEQPLTSTKTPKP). 4 disordered regions span residues 267-301 (AIPS…QSII), 414-440 (TRDL…VSQT), 479-518 (SRAQ…FLPA), and 533-561 (LQNN…SKQE). Residues 417-440 (LSSVSQSQSYSSGHSQGLSPVSQT) show a composition bias toward low complexity. Phosphoserine occurs at positions 586, 615, and 886. Position 949 is a phosphothreonine (threonine 949). The interval 964–1033 (GPSHEVQEQS…EFTLGGDDSG (70 aa)) is disordered. Positions 971–985 (EQSSGPFKKQSATNL) are enriched in polar residues. Phosphoserine is present on serine 987. Polar residues predominate over residues 997–1024 (STLNNNRNQEFVSSSRSISGENATSESE). Residues lysine 1058 and lysine 1083 each participate in a glycyl lysine isopeptide (Lys-Gly) (interchain with G-Cter in SUMO2) cross-link. Disordered regions lie at residues 1073-1132 (KKRA…EKMR) and 1178-1217 (RPGT…DKVD). Positions 1120-1132 (SCHDGYQHQEKMR) are enriched in basic and acidic residues. Phosphoserine is present on residues serine 1211, serine 1230, serine 1231, and serine 1239. Residues 1256-1286 (TSDKKKKTEALQVATTSPTANTTGTATTSST) are disordered. The span at 1269–1286 (ATTSPTANTTGTATTSST) shows a compositional bias: low complexity. Threonine 1341 is subject to Phosphothreonine. A Phosphoserine modification is found at serine 1348. A disordered region spans residues 1441–1532 (VCSKKPRNKP…SSDDEEFEPP (92 aa)). A compositionally biased stretch (polar residues) spans 1449 to 1478 (KPSQTIRTVQAKPSSSSKTSDPLASKTTTT). Residues 1492-1508 (VKAEPPPKKRKKWKEEF) show a composition bias toward basic and acidic residues.

In terms of assembly, interacts with TET1.

The protein localises to the chromosome. Functionally, plays an essential role in the protection and maintenance of transcriptional and developmental programs. Protects many bivalent promoters and poised enhancers from hypermethylation, showing a marked preference for these regulatory elements over other types of promoters or enhancers. Mechanistically, cooperates with TET1 and binds to DNA in a common complex to inhibit the binding of DNMT3A/3B and therefore de novo methylation. The chain is Glutamine and serine-rich protein 1 (QSER1) from Homo sapiens (Human).